A 265-amino-acid chain; its full sequence is DNA repair protein RecO (265 aa).

It belongs to the RecO family.

In terms of biological role, involved in DNA repair and RecF pathway recombination. The chain is DNA repair protein RecO from Mycobacterium ulcerans (strain Agy99).